Here is a 58-residue protein sequence, read N- to C-terminus: Short neurotoxin MS11 (58 aa).

Intrachain disulfides connect C3–C20, C13–C38, C42–C50, and C51–C56.

This sequence belongs to the three-finger toxin family. Short-chain subfamily. Expressed by the venom gland.

It is found in the secreted. Produces peripheral paralysis by blocking neuromuscular transmission at the postsynaptic site. Binds to and inhibits the endogenous nicotinic acetylcholine receptors (nAChR) in the human rhabdomyosarcoma TE 671 cell line with an IC(50) of 266 mM. Not toxic to mice by intraperitoneal injection or to zebrafish by injection at the back dorsolateral region. This is Short neurotoxin MS11 from Micrurus surinamensis (Surinam coral snake).